The primary structure comprises 126 residues: Fluoride-specific ion channel FluC (126 aa).

A run of 4 helical transmembrane segments spans residues 5–25 (FILA…LVGI), 39–59 (TLFI…LFAV), 69–89 (IFLV…SLDT), and 103–123 (AYMI…IQIV). Na(+)-binding residues include Gly77 and Thr80.

This sequence belongs to the fluoride channel Fluc/FEX (TC 1.A.43) family.

The protein resides in the cell inner membrane. It catalyses the reaction fluoride(in) = fluoride(out). Na(+) is not transported, but it plays an essential structural role and its presence is essential for fluoride channel function. Its function is as follows. Fluoride-specific ion channel. Important for reducing fluoride concentration in the cell, thus reducing its toxicity. This is Fluoride-specific ion channel FluC from Nitrobacter winogradskyi (strain ATCC 25391 / DSM 10237 / CIP 104748 / NCIMB 11846 / Nb-255).